Consider the following 97-residue polypeptide: Serine protease inhibitor Kazal-type 13 (97 aa).

A signal peptide spans 1 to 26 (MTRRGCWPHRIIFSLILLTWTHVTLA). Positions 36–97 (NWPKPPCKMY…IEFVKYGKCE (62 aa)) constitute a Kazal-like domain. 3 cysteine pairs are disulfide-bonded: Cys42–Cys78, Cys56–Cys75, and Cys64–Cys96.

Restricted to the epididymis, with highest levels in the initial segment, including epithelial cells, lumen, and sperm (at protein level). Localizes to the sperm heads, where it is restricted to the acrosomal region in epididymal spermatozoa, but not in testicular spermatozoa (at protein level).

It is found in the secreted. Functionally, may be a serine protease inhibitor. Essential for sperm maturation and fertility. Inhibits sperm acrosome reaction, protecting sperm from premature reaction. In Rattus norvegicus (Rat), this protein is Serine protease inhibitor Kazal-type 13 (Spink13).